The following is a 365-amino-acid chain: Peptide chain release factor 2 (365 aa).

An N5-methylglutamine modification is found at Gln252.

It belongs to the prokaryotic/mitochondrial release factor family. In terms of processing, methylated by PrmC. Methylation increases the termination efficiency of RF2.

The protein localises to the cytoplasm. In terms of biological role, peptide chain release factor 2 directs the termination of translation in response to the peptide chain termination codons UGA and UAA. The chain is Peptide chain release factor 2 from Escherichia coli O9:H4 (strain HS).